Consider the following 88-residue polypeptide: Small ribosomal subunit protein bS20 (88 aa).

The disordered stretch occupies residues 1 to 33 (MANTSSAKKATRKIARRTAVNKSRRTQMRGSVR).

This sequence belongs to the bacterial ribosomal protein bS20 family.

Binds directly to 16S ribosomal RNA. The protein is Small ribosomal subunit protein bS20 of Rhodopseudomonas palustris (strain BisB5).